Consider the following 371-residue polypeptide: Cathepsin W (371 aa).

The N-terminal stretch at 1 to 21 (MTLTAHLSYFLVLLLAGQGLS) is a signal peptide. Residues 22-125 (DSLLTKDAGP…KVESNTWGES (104 aa)) constitute a propeptide that is removed on maturation. Asparagine 48 and asparagine 112 each carry an N-linked (GlcNAc...) asparagine glycan. Disulfide bonds link cysteine 148/cysteine 189, cysteine 182/cysteine 224, and cysteine 282/cysteine 347. The active site involves cysteine 151. Asparagine 203 carries an N-linked (GlcNAc...) asparagine glycan. Catalysis depends on residues histidine 289 and asparagine 326. Residue asparagine 344 is glycosylated (N-linked (GlcNAc...) asparagine).

It belongs to the peptidase C1 family.

Its subcellular location is the endoplasmic reticulum. In terms of biological role, may have a specific function in the mechanism or regulation of T-cell cytolytic activity. The polypeptide is Cathepsin W (Ctsw) (Mus musculus (Mouse)).